Here is a 191-residue protein sequence, read N- to C-terminus: MVDMSKVKLRIENIVASVDLFAQLDLEKVLDLCPNSKYNPEEFPGIICHLDDPKVALLIFSSGKLVVTGAKSVQDIERAVAKLAQKLKSIGVKFKRAPQIDVQNMVFSGDIGREFNLDVVALTLPNCEYEPEQFPGVIYRVKEPKSVILLFSSGKIVCSGAKSEADAWEAVRKLLRELDKYGLLEEEEEEL.

Tandem repeats lie at residues 11–87 (IENI…AQKL) and 102–178 (VQNM…LREL).

This sequence belongs to the TBP family.

Its function is as follows. General factor that plays a role in the activation of archaeal genes transcribed by RNA polymerase. Binds specifically to the TATA box promoter element which lies close to the position of transcription initiation. The protein is TATA-box-binding protein (tbp) of Pyrococcus furiosus (strain ATCC 43587 / DSM 3638 / JCM 8422 / Vc1).